Here is a 490-residue protein sequence, read N- to C-terminus: Homoserine O-acetyltransferase (490 aa).

The AB hydrolase-1 domain occupies 48-354; the sequence is NVILVCHALT…NSEYGHDAFL (307 aa). S153 functions as the Nucleophile in the catalytic mechanism. R223 is a binding site for substrate. Active-site residues include D317 and H350. D351 lines the substrate pocket. 2 consecutive CBS domains span residues 377–434 and 438–490; these read MSHT…ANSI and MTKN…LYEK.

It belongs to the AB hydrolase superfamily. MetX family. Homodimer.

It is found in the cytoplasm. It carries out the reaction L-homoserine + acetyl-CoA = O-acetyl-L-homoserine + CoA. Its pathway is amino-acid biosynthesis; L-methionine biosynthesis via de novo pathway; O-acetyl-L-homoserine from L-homoserine: step 1/1. In terms of biological role, transfers an acetyl group from acetyl-CoA to L-homoserine, forming acetyl-L-homoserine. The chain is Homoserine O-acetyltransferase from Methanosphaera stadtmanae (strain ATCC 43021 / DSM 3091 / JCM 11832 / MCB-3).